The following is a 323-amino-acid chain: Fructose-1,6-bisphosphatase class 1 (323 aa).

Residues E88, D107, L109, and D110 each contribute to the Mg(2+) site. Substrate-binding positions include 110–113 and N200; that span reads DGSS. E272 lines the Mg(2+) pocket.

Belongs to the FBPase class 1 family. In terms of assembly, homotetramer. Requires Mg(2+) as cofactor.

It is found in the cytoplasm. It catalyses the reaction beta-D-fructose 1,6-bisphosphate + H2O = beta-D-fructose 6-phosphate + phosphate. The protein operates within carbohydrate biosynthesis; gluconeogenesis. The polypeptide is Fructose-1,6-bisphosphatase class 1 (Acinetobacter baumannii (strain ACICU)).